The following is a 324-amino-acid chain: Adducin-related protein C1289.14 (324 aa).

Belongs to the aldolase class II family. Adducin subfamily.

The chain is Adducin-related protein C1289.14 from Schizosaccharomyces pombe (strain 972 / ATCC 24843) (Fission yeast).